We begin with the raw amino-acid sequence, 137 residues long: Large ribosomal subunit protein uL16 (137 aa).

A disordered region spans residues 1-22 (MLQPKRTKFRKVQKGRNRGLAH).

Belongs to the universal ribosomal protein uL16 family. As to quaternary structure, part of the 50S ribosomal subunit.

Binds 23S rRNA and is also seen to make contacts with the A and possibly P site tRNAs. The chain is Large ribosomal subunit protein uL16 from Chromohalobacter salexigens (strain ATCC BAA-138 / DSM 3043 / CIP 106854 / NCIMB 13768 / 1H11).